Reading from the N-terminus, the 165-residue chain is Trypsin alpha-3 (165 aa).

The 163-residue stretch at 1-163 (NSGGVLVSVA…LRSWVVSAAN (163 aa)) folds into the Peptidase S1 domain. Aspartate 26 (charge relay system) is an active-site residue. Cystine bridges form between cysteine 89-cysteine 106 and cysteine 115-cysteine 139. Serine 119 functions as the Charge relay system in the catalytic mechanism.

This sequence belongs to the peptidase S1 family.

It is found in the secreted. The protein resides in the extracellular space. The enzyme catalyses Preferential cleavage: Arg-|-Xaa, Lys-|-Xaa.. The protein is Trypsin alpha-3 of Lucilia cuprina (Green bottle fly).